We begin with the raw amino-acid sequence, 86 residues long: BolA-like protein 2 (86 aa).

Met1 is subject to N-acetylmethionine.

It belongs to the BolA/IbaG family. In terms of assembly, interacts with GLRX3; forms a heterotrimeric complex composed by two BOLA2 molecules and one GLRX3 molecule; linked by [2Fe-2S] clusters.

Its subcellular location is the cytoplasm. It localises to the nucleus. In terms of biological role, acts as a cytosolic iron-sulfur (Fe-S) cluster assembly factor that facilitates [2Fe-2S] cluster insertion into a subset of cytosolic proteins. Acts together with the monothiol glutaredoxin GLRX3. The protein is BolA-like protein 2 (Bola2) of Mus musculus (Mouse).